Reading from the N-terminus, the 563-residue chain is Arginine--tRNA ligase (563 aa).

The 'HIGH' region signature appears at 121-131 (PNIAKPFSIGH).

This sequence belongs to the class-I aminoacyl-tRNA synthetase family. Monomer.

It localises to the cytoplasm. The enzyme catalyses tRNA(Arg) + L-arginine + ATP = L-arginyl-tRNA(Arg) + AMP + diphosphate. In Streptococcus pyogenes serotype M3 (strain ATCC BAA-595 / MGAS315), this protein is Arginine--tRNA ligase.